Consider the following 280-residue polypeptide: Gastrula zinc finger protein XlCGF46.1 (280 aa).

10 consecutive C2H2-type zinc fingers follow at residues 6 to 28 (FACK…KLMH), 34 to 56 (FECT…QLIH), 62 to 84 (FVCP…LLCH), 90 to 112 (FTCK…KLTH), 118 to 140 (FICS…QLIH), 146 to 168 (YVCT…LRTH), 174 to 196 (FKCE…KVTH), 202 to 224 (FTCE…QLTH), 230 to 252 (FKCE…QRFH), and 258 to 280 (YKCN…ELSH).

Belongs to the krueppel C2H2-type zinc-finger protein family.

It localises to the nucleus. In terms of biological role, may be involved in transcriptional regulation. The chain is Gastrula zinc finger protein XlCGF46.1 from Xenopus laevis (African clawed frog).